Consider the following 191-residue polypeptide: Ribosome maturation factor RimP (191 aa).

It belongs to the RimP family.

Its subcellular location is the cytoplasm. Its function is as follows. Required for maturation of 30S ribosomal subunits. This Caulobacter vibrioides (strain NA1000 / CB15N) (Caulobacter crescentus) protein is Ribosome maturation factor RimP.